The primary structure comprises 309 residues: 5-oxoprolinase subunit C (309 aa).

Belongs to the PxpC family. In terms of assembly, forms a complex composed of PxpA, PxpB and PxpC.

It catalyses the reaction 5-oxo-L-proline + ATP + 2 H2O = L-glutamate + ADP + phosphate + H(+). Functionally, catalyzes the cleavage of 5-oxoproline to form L-glutamate coupled to the hydrolysis of ATP to ADP and inorganic phosphate. This Haemophilus influenzae (strain ATCC 51907 / DSM 11121 / KW20 / Rd) protein is 5-oxoprolinase subunit C.